The sequence spans 544 residues: Chaperonin GroEL 1 (544 aa).

ATP contacts are provided by residues 29 to 32 (TLGP), 86 to 90 (DGTTT), Gly413, 479 to 481 (NAA), and Asp495. Residues 525 to 544 (PEPKDNAPAGAGAGGGDFDY) form a disordered region. Gly residues predominate over residues 535 to 544 (AGAGGGDFDY).

It belongs to the chaperonin (HSP60) family. In terms of assembly, forms a cylinder of 14 subunits composed of two heptameric rings stacked back-to-back. Interacts with the co-chaperonin GroES.

Its subcellular location is the cytoplasm. It catalyses the reaction ATP + H2O + a folded polypeptide = ADP + phosphate + an unfolded polypeptide.. Its function is as follows. Together with its co-chaperonin GroES, plays an essential role in assisting protein folding. The GroEL-GroES system forms a nano-cage that allows encapsulation of the non-native substrate proteins and provides a physical environment optimized to promote and accelerate protein folding. The chain is Chaperonin GroEL 1 from Nostoc sp. (strain PCC 7120 / SAG 25.82 / UTEX 2576).